The chain runs to 385 residues: Probable caffeine synthase 3 (385 aa).

S-adenosyl-L-homocysteine is bound by residues Tyr-18, Cys-62, Asn-67, Asp-101, Leu-102, Ser-140, and Phe-141. Caffeine contacts are provided by Tyr-158, Gln-161, and Phe-162. Position 179 (Asn-179) interacts with Mg(2+). Residue Thr-238 participates in caffeine binding. Residues Asp-261, Phe-263, and Asn-264 each coordinate Mg(2+). Tyr-369 contacts caffeine.

Belongs to the methyltransferase superfamily. Type-7 methyltransferase family. It depends on Mg(2+) as a cofactor. Expressed in roots, stems, young and old leaves.

It participates in alkaloid biosynthesis. Functionally, may be involved in the biosynthesis of caffeine. In Coffea arabica (Arabian coffee), this protein is Probable caffeine synthase 3.